Here is a 562-residue protein sequence, read N- to C-terminus: Tissue-type plasminogen activator (562 aa).

Residues 1 to 22 (MDAMKRGLCCVLLLCGAVFVSP) form the signal peptide. Positions 23–32 (SQEIHARFRR) are excised as a propeptide. Residues 33–35 (GAR) constitute a propeptide, removed by plasmin. The Fibronectin type-I domain maps to 39-81 (VICRDEKTQMIYQQHQSWLRPVLRSNRVEYCWCNSGRAQCHSV). Intrachain disulfides connect Cys41/Cys71, Cys69/Cys78, Cys86/Cys97, Cys91/Cys108, Cys110/Cys119, Cys127/Cys208, Cys148/Cys190, Cys179/Cys203, Cys215/Cys296, Cys236/Cys278, Cys267/Cys291, Cys299/Cys430, Cys342/Cys358, Cys350/Cys419, Cys444/Cys519, Cys476/Cys492, and Cys509/Cys537. Residues 42 to 52 (RDEKTQMIYQQ) form an important for binding to annexin A2 region. Residues 82 to 120 (PVKSCSEPRCFNGGTCQQALYFSDFVCQCPEGFAGKCCE) enclose the EGF-like domain. Residue Thr96 is glycosylated (O-linked (Fuc) threonine). Kringle domains are found at residues 127-208 (CYED…TPAC) and 215-296 (CYFG…VPSC). Asn152 carries N-linked (GlcNAc...) asparagine glycosylation. N-linked (GlcNAc...) asparagine; partial glycosylation occurs at Asn219. Residues 311 to 561 (IKGGLFADIA…YLDWIRDNMR (251 aa)) form the Peptidase S1 domain. Catalysis depends on charge relay system residues His357 and Asp406. The N-linked (GlcNAc...) asparagine glycan is linked to Asn483. The Charge relay system role is filled by Ser513.

It belongs to the peptidase S1 family. As to quaternary structure, heterodimer of chain A and chain B held by a disulfide bond. Forms a heterodimer with SERPINA5. Binds to fibrin with high affinity. This interaction leads to an increase in the catalytic efficiency of the enzyme between 100-fold and 1000-fold, due to an increase in affinity for plasminogen. Similarly, binding to heparin increases the activation of plasminogen. Binds to annexin A2, cytokeratin-8, fibronectin and laminin. Binds to mannose receptor and the low-density lipoprotein receptor-related protein (LRP1); these proteins are involved in TPA clearance. Yet unidentified interactions on endothelial cells and vascular smooth muscle cells (VSMC) lead to a 100-fold stimulation of plasminogen activation. In addition, binding to VSMC reduces TPA inhibition by PAI-1 by 30-fold. Binds LRP1B; binding is followed by internalization and degradation. Interacts with SERPINE1. In complex with SERPINE1, interacts with SORL1. Interacts with apyrase from Anopheles gambiae saliva; the interaction results in PLAT activation probably via an allosteric activation mechanism. In terms of processing, the single chain, almost fully active enzyme, can be further processed into a two-chain fully active form by a cleavage after Arg-310 catalyzed by plasmin, tissue kallikrein or factor Xa. Differential cell-specific N-linked glycosylation gives rise to two glycoforms, type I (glycosylated at Asn-219) and type II (not glycosylated at Asn-219). The single chain type I glycoform is less readily converted into the two-chain form by plasmin, and the two-chain type I glycoform has a lower activity than the two-chain type II glycoform in the presence of fibrin. Post-translationally, N-glycosylation of Asn-152; the bound oligomannosidic glycan is involved in the interaction with the mannose receptor. In terms of processing, characterization of O-linked glycan was studied in Bowes melanoma cell line. As to expression, synthesized in numerous tissues (including tumors) and secreted into most extracellular body fluids, such as plasma, uterine fluid, saliva, gingival crevicular fluid, tears, seminal fluid, and milk.

It is found in the secreted. It localises to the extracellular space. It catalyses the reaction Specific cleavage of Arg-|-Val bond in plasminogen to form plasmin.. With respect to regulation, inhibited by SERPINA5. Inhibited by SERPINE1. Functionally, converts the abundant, but inactive, zymogen plasminogen to plasmin by hydrolyzing a single Arg-Val bond in plasminogen. By controlling plasmin-mediated proteolysis, it plays an important role in tissue remodeling and degradation, in cell migration and many other physiopathological events. During oocyte activation, plays a role in cortical granule reaction in the zona reaction, which contributes to the block to polyspermy. The polypeptide is Tissue-type plasminogen activator (Homo sapiens (Human)).